Here is a 314-residue protein sequence, read N- to C-terminus: MLENYKHTTVLLDEAVNGLNIRSGGIYIDGTFGRGGHSRLILSQLGPEGRLLAIDRDPQAIEAAKAIDDSRFSIIHGPFSAMADYVAELGLTGQIDGVLLDLGVSSPQLDDPERGFSFMRDGPLDMRMDPTRGSSAAEWLMKAEADDIVWVLKTFGEERFAKRIARAIVERNRTEPMTRTKELASLIAAASPIREKHKHPATRSFQAIRIYINSELEEIERALEGALSVLAPQGRLSVISFHSLEDRIVKRFIRHQSRGPQVPAGLPLTEEQLRSQGGQTLKPVGKKLMPSEAEVAENPRARSSVLRFAERLPA.

S-adenosyl-L-methionine-binding positions include glycine 35–histidine 37, aspartate 55, phenylalanine 79, aspartate 101, and glutamine 108. A disordered region spans residues glutamine 276–alanine 296.

It belongs to the methyltransferase superfamily. RsmH family.

The protein resides in the cytoplasm. It carries out the reaction cytidine(1402) in 16S rRNA + S-adenosyl-L-methionine = N(4)-methylcytidine(1402) in 16S rRNA + S-adenosyl-L-homocysteine + H(+). Functionally, specifically methylates the N4 position of cytidine in position 1402 (C1402) of 16S rRNA. This chain is Ribosomal RNA small subunit methyltransferase H, found in Pectobacterium atrosepticum (strain SCRI 1043 / ATCC BAA-672) (Erwinia carotovora subsp. atroseptica).